A 727-amino-acid polypeptide reads, in one-letter code: MQKAFRNVLVIAIIGVIIFGVFSYINGNGNTPKQLSYSQFVEKLDKGDLKTLEIQPEQNVYLVSGKTKNDEDYSSTILYNNEKDLQKITNEAKSQKGLDFKVKEEEKQSVFVSMLTTLIPVLIIAFLFIFFLSQAQGGGGGGRMMNFGKSKAKMYDNQKRRVRFSDVAGADEEKQELIEIVDFLKDNKKFKQMGSRIPKGVLLVGPPGTGKTLLARAVAGEAGAPFFSISGSDFVEMFVGVGASRVRDLFENAKKNAPCIIFIDEIDAVGRQRGAGVGGGHDEREQTLNQLLVEMDGFGENEGIIMIAATNRPDILDPALLRPGRFDRQIQVGRPDVKGREAILHVHSKNKPLDETVDLKAISQRTPGFSGADLENLLNEASLIAAREGKNKIDMRDIEEATDRVIAGPAKKSRVISDKERNIVAHHEAGHTVIGMVLDEAEVVHKVTIVPRGQAGGYAMMLPKQDRFLMTEPELLDKICGLLGGRVSEDINFHEVSTGASNDFERATQIARSMVTEYGMSKKLGPLQFSSSGGGQVFLGKDMQGEPNYSGQIAYEIDKEVQRIIKEQYERCKQILLDHEKELKLIAKTLLTEETLVAEQIRSLFYDGVLPEVDYDAARVVKDEDSDYSEGKYGKSYDDIREEQLEEGKEDMREDRKEDNDMNRERRHRQRDDRDNQTGHDQLRDGSNGDNDQHRGHSNNEEDTGHEQSPNIDKPYNPNDPNNPSNR.

At 1-6 (MQKAFR) the chain is on the cytoplasmic side. A helical transmembrane segment spans residues 7–27 (NVLVIAIIGVIIFGVFSYING). Residues 28-110 (NGNTPKQLSY…KVKEEEKQSV (83 aa)) are Extracellular-facing. The helical transmembrane segment at 111-131 (FVSMLTTLIPVLIIAFLFIFF) threads the bilayer. The Cytoplasmic portion of the chain corresponds to 132 to 727 (LSQAQGGGGG…PNDPNNPSNR (596 aa)). Residue 205-212 (GPPGTGKT) coordinates ATP. His-427 contacts Zn(2+). The active site involves Glu-428. Zn(2+) contacts are provided by His-431 and Asp-503. Basic and acidic residues-rich tracts occupy residues 645–684 (LEEGKEDMREDRKEDNDMNRERRHRQRDDRDNQTGHDQLR) and 691–706 (NDQHRGHSNNEEDTGH). The interval 645 to 727 (LEEGKEDMRE…PNDPNNPSNR (83 aa)) is disordered. Residues 710–727 (PNIDKPYNPNDPNNPSNR) are compositionally biased toward low complexity.

This sequence in the central section; belongs to the AAA ATPase family. In the C-terminal section; belongs to the peptidase M41 family. As to quaternary structure, homohexamer. The cofactor is Zn(2+).

The protein localises to the cell membrane. In terms of biological role, acts as a processive, ATP-dependent zinc metallopeptidase for both cytoplasmic and membrane proteins. Plays a role in the quality control of integral membrane proteins. This Staphylococcus haemolyticus (strain JCSC1435) protein is ATP-dependent zinc metalloprotease FtsH.